Here is a 375-residue protein sequence, read N- to C-terminus: Antichymotrypsin-2 (375 aa).

Belongs to the serpin family. In terms of tissue distribution, hemolymph.

It is found in the secreted. In Bombyx mori (Silk moth), this protein is Antichymotrypsin-2.